An 86-amino-acid polypeptide reads, in one-letter code: MVKIRLTRGGAKKRPFYQIIVTDSRNKRDGRNIERVGHYNPVAQGAESRVVLNMARVEHWVKNGAQLTDKVRSLLKEVSKTQATAA.

Belongs to the bacterial ribosomal protein bS16 family.

This chain is Small ribosomal subunit protein bS16, found in Xylella fastidiosa (strain 9a5c).